Reading from the N-terminus, the 121-residue chain is UPF0102 protein XF_0554 (121 aa).

This sequence belongs to the UPF0102 family.

The sequence is that of UPF0102 protein XF_0554 from Xylella fastidiosa (strain 9a5c).